A 137-amino-acid chain; its full sequence is Transcription antitermination protein NusB (137 aa).

This sequence belongs to the NusB family.

Functionally, involved in transcription antitermination. Required for transcription of ribosomal RNA (rRNA) genes. Binds specifically to the boxA antiterminator sequence of the ribosomal RNA (rrn) operons. The chain is Transcription antitermination protein NusB from Aeromonas salmonicida (strain A449).